Reading from the N-terminus, the 262-residue chain is Acyl-[acyl-carrier-protein]--UDP-N-acetylglucosamine O-acyltransferase (262 aa).

It belongs to the transferase hexapeptide repeat family. LpxA subfamily. In terms of assembly, homotrimer.

It is found in the cytoplasm. It catalyses the reaction a (3R)-hydroxyacyl-[ACP] + UDP-N-acetyl-alpha-D-glucosamine = a UDP-3-O-[(3R)-3-hydroxyacyl]-N-acetyl-alpha-D-glucosamine + holo-[ACP]. The protein operates within glycolipid biosynthesis; lipid IV(A) biosynthesis; lipid IV(A) from (3R)-3-hydroxytetradecanoyl-[acyl-carrier-protein] and UDP-N-acetyl-alpha-D-glucosamine: step 1/6. Its function is as follows. Involved in the biosynthesis of lipid A, a phosphorylated glycolipid that anchors the lipopolysaccharide to the outer membrane of the cell. This chain is Acyl-[acyl-carrier-protein]--UDP-N-acetylglucosamine O-acyltransferase, found in Vibrio parahaemolyticus serotype O3:K6 (strain RIMD 2210633).